Here is a 60-residue protein sequence, read N- to C-terminus: UPF0337 protein asr1134 (60 aa).

Composition is skewed to basic and acidic residues over residues M1–A18 and P29–D60. Residues M1–D60 form a disordered region.

This sequence belongs to the UPF0337 (CsbD) family.

The polypeptide is UPF0337 protein asr1134 (Nostoc sp. (strain PCC 7120 / SAG 25.82 / UTEX 2576)).